The sequence spans 241 residues: Ribonuclease HII (241 aa).

The region spanning N57–G241 is the RNase H type-2 domain. Residues D63, E64, and D155 each contribute to the a divalent metal cation site.

This sequence belongs to the RNase HII family. Mn(2+) is required as a cofactor. Mg(2+) serves as cofactor.

It localises to the cytoplasm. The catalysed reaction is Endonucleolytic cleavage to 5'-phosphomonoester.. Its function is as follows. Endonuclease that specifically degrades the RNA of RNA-DNA hybrids. The polypeptide is Ribonuclease HII (Caldanaerobacter subterraneus subsp. tengcongensis (strain DSM 15242 / JCM 11007 / NBRC 100824 / MB4) (Thermoanaerobacter tengcongensis)).